Here is a 179-residue protein sequence, read N- to C-terminus: Large ribosomal subunit protein uL5 (179 aa).

The protein belongs to the universal ribosomal protein uL5 family. In terms of assembly, part of the 50S ribosomal subunit; part of the 5S rRNA/L5/L18/L25 subcomplex. Contacts the 5S rRNA and the P site tRNA. Forms a bridge to the 30S subunit in the 70S ribosome.

Functionally, this is one of the proteins that bind and probably mediate the attachment of the 5S RNA into the large ribosomal subunit, where it forms part of the central protuberance. In the 70S ribosome it contacts protein S13 of the 30S subunit (bridge B1b), connecting the 2 subunits; this bridge is implicated in subunit movement. Contacts the P site tRNA; the 5S rRNA and some of its associated proteins might help stabilize positioning of ribosome-bound tRNAs. The sequence is that of Large ribosomal subunit protein uL5 from Haemophilus influenzae (strain 86-028NP).